We begin with the raw amino-acid sequence, 203 residues long: uncharacterized protein (203 aa).

Helical transmembrane passes span 60–80 (IIDM…FFLY), 114–134 (WFQL…YFCT), and 157–177 (LQLG…ALIL). 192-199 (GAMSEGKT) is a binding site for ATP.

Its subcellular location is the membrane. This is an uncharacterized protein from Saccharomyces cerevisiae (strain ATCC 204508 / S288c) (Baker's yeast).